Here is a 65-residue protein sequence, read N- to C-terminus: Small ribosomal subunit protein bS21 (65 aa).

The tract at residues Gly45–Ser65 is disordered. A compositionally biased stretch (basic residues) spans Lys48–Gln57.

This sequence belongs to the bacterial ribosomal protein bS21 family.

This Pelodictyon phaeoclathratiforme (strain DSM 5477 / BU-1) protein is Small ribosomal subunit protein bS21.